We begin with the raw amino-acid sequence, 1475 residues long: Alpha-glucan water dikinase, chloroplastic (1475 aa).

The N-terminal 85 residues, 1 to 85 (MSNSIGRNVL…HRPVLITPRA (85 aa)), are a transit peptide targeting the chloroplast. H1077 (tele-phosphohistidine intermediate) is an active-site residue.

This sequence belongs to the PEP-utilizing enzyme family. Homodimer. It depends on Mg(2+) as a cofactor.

It localises to the plastid. Its subcellular location is the chloroplast. It carries out the reaction [(1-&gt;4)-alpha-D-glucosyl](n) + n ATP + n H2O = [(1-&gt;4)-6-phospho-alpha-D-glucosyl](n) + n AMP + n phosphate + 2n H(+). Its function is as follows. Mediates the incorporation of phosphate into starch-like alpha-glucan, mostly at the C-6 position of glucose units. Acts as an overall regulator of starch mobilization. Required for starch degradation, suggesting that the phosphate content of starch regulates its degradability. This Citrus reticulata (Tangerine) protein is Alpha-glucan water dikinase, chloroplastic (R1).